A 149-amino-acid polypeptide reads, in one-letter code: Ribonuclease HI (149 aa).

Residues 1 to 142 (MTPKVTIYTD…ADALANEGLR (142 aa)) enclose the RNase H type-1 domain. Residues Asp10, Glu48, Asp70, and Asp134 each contribute to the Mg(2+) site.

This sequence belongs to the RNase H family. In terms of assembly, monomer. It depends on Mg(2+) as a cofactor.

Its subcellular location is the cytoplasm. It carries out the reaction Endonucleolytic cleavage to 5'-phosphomonoester.. Endonuclease that specifically degrades the RNA of RNA-DNA hybrids. In Caulobacter vibrioides (strain ATCC 19089 / CIP 103742 / CB 15) (Caulobacter crescentus), this protein is Ribonuclease HI.